The sequence spans 671 residues: Probable serine/threonine-protein kinase DDB_G0286627 (671 aa).

Residues 31–283 (WVIERQLSKG…SHQLIKHPFF (253 aa)) form the Protein kinase domain. ATP contacts are provided by residues 37–45 (LSKGSFGQV) and K61. Residue D148 is the Proton acceptor of the active site. The chain crosses the membrane as a helical span at residues 369-389 (FKIIYLFLILLFLMTILVNLN). The tract at residues 410–523 (PESNPIKKPS…PPVTETPKPT (114 aa)) is disordered. Positions 427–490 (NQYSEGSQSS…PTDSSTTDPP (64 aa)) are enriched in low complexity. The span at 491–513 (VTDPPITDPPITDPPVTDPPITE) shows a compositional bias: pro residues.

It belongs to the protein kinase superfamily. STE Ser/Thr protein kinase family. The cofactor is Mg(2+).

Its subcellular location is the membrane. It carries out the reaction L-seryl-[protein] + ATP = O-phospho-L-seryl-[protein] + ADP + H(+). It catalyses the reaction L-threonyl-[protein] + ATP = O-phospho-L-threonyl-[protein] + ADP + H(+). This is Probable serine/threonine-protein kinase DDB_G0286627 from Dictyostelium discoideum (Social amoeba).